A 131-amino-acid polypeptide reads, in one-letter code: Small ribosomal subunit protein uS8 (131 aa).

This sequence belongs to the universal ribosomal protein uS8 family. In terms of assembly, part of the 30S ribosomal subunit. Contacts proteins S5 and S12.

Its function is as follows. One of the primary rRNA binding proteins, it binds directly to 16S rRNA central domain where it helps coordinate assembly of the platform of the 30S subunit. The protein is Small ribosomal subunit protein uS8 of Finegoldia magna (strain ATCC 29328 / DSM 20472 / WAL 2508) (Peptostreptococcus magnus).